The chain runs to 135 residues: Small ribosomal subunit protein uS11 (135 aa).

It belongs to the universal ribosomal protein uS11 family. Part of the 30S ribosomal subunit. Interacts with proteins S7 and S18. Binds to IF-3.

Located on the platform of the 30S subunit, it bridges several disparate RNA helices of the 16S rRNA. Forms part of the Shine-Dalgarno cleft in the 70S ribosome. The chain is Small ribosomal subunit protein uS11 from Cutibacterium acnes (strain DSM 16379 / KPA171202) (Propionibacterium acnes).